The sequence spans 586 residues: A-type ATP synthase subunit A (586 aa).

233 to 240 lines the ATP pocket; the sequence is GPFGSGKT.

This sequence belongs to the ATPase alpha/beta chains family. In terms of assembly, has multiple subunits with at least A(3), B(3), C, D, E, F, H, I and proteolipid K(x).

Its subcellular location is the cell membrane. The enzyme catalyses ATP + H2O + 4 H(+)(in) = ADP + phosphate + 5 H(+)(out). Component of the A-type ATP synthase that produces ATP from ADP in the presence of a proton gradient across the membrane. The A chain is the catalytic subunit. The polypeptide is A-type ATP synthase subunit A (Methanococcus aeolicus (strain ATCC BAA-1280 / DSM 17508 / OCM 812 / Nankai-3)).